A 303-amino-acid chain; its full sequence is Uricase (303 aa).

At alanine 2 the chain carries N-acetylalanine. Lysine 10 and lysine 23 each carry N6-acetyllysine; alternate. Lysine 10 and lysine 23 each carry N6-succinyllysine; alternate. The active-site Charge relay system is the lysine 23. An N6-acetyllysine mark is found at lysine 27 and lysine 36. 2 positions are modified to phosphoserine: serine 39 and serine 63. Threonine 68 (charge relay system) is an active-site residue. 2 residues coordinate urate: threonine 68 and aspartate 69. 3 positions are modified to N6-acetyllysine: lysine 118, lysine 122, and lysine 164. A urate-binding site is contributed by phenylalanine 170. Lysine 175 and lysine 185 each carry N6-acetyllysine. Arginine 187 contributes to the urate binding site. Position 220 is an N6-acetyllysine; alternate (lysine 220). Residue lysine 220 is modified to N6-succinyllysine; alternate. Residue serine 231 is modified to Phosphoserine. Residues valine 234, glutamine 235, and asparagine 261 each coordinate urate. The active-site Charge relay system is the histidine 263. Lysine 277 carries the N6-acetyllysine modification. The residue at position 288 (tyrosine 288) is a Phosphotyrosine. The Microbody targeting signal signature appears at 301–303 (SRL).

This sequence belongs to the uricase family. As to expression, expressed in liver. Not detected in other tissues tested.

It localises to the peroxisome. It carries out the reaction urate + O2 + H2O = 5-hydroxyisourate + H2O2. The protein operates within purine metabolism; urate degradation; (S)-allantoin from urate: step 1/3. Its activity is regulated as follows. Competitively inhibited by xanthine. Functionally, catalyzes the oxidation of uric acid to 5-hydroxyisourate, which is further processed to form (S)-allantoin. The polypeptide is Uricase (Uox) (Rattus norvegicus (Rat)).